The chain runs to 1551 residues: Pentafunctional AROM polypeptide (1551 aa).

Residues 1 to 379 form a 3-dehydroquinate synthase region; that stretch reads MSIEKVPILG…YQLKAHQVSK (379 aa). NAD(+) is bound by residues 42 to 44, 80 to 83, 111 to 113, and Asp-116; these read DTN, ENNK, and GGV. Arg-127 contacts 7-phospho-2-dehydro-3-deoxy-D-arabino-heptonate. Residue 136 to 137 coordinates NAD(+); that stretch reads TT. Residues Asp-143 and Lys-149 each contribute to the 7-phospho-2-dehydro-3-deoxy-D-arabino-heptonate site. Lys-158 is a binding site for NAD(+). Position 159 (Asn-159) interacts with 7-phospho-2-dehydro-3-deoxy-D-arabino-heptonate. NAD(+) is bound by residues 176-179 and Asn-187; that span reads FLET. Glu-191 contacts Zn(2+). 7-phospho-2-dehydro-3-deoxy-D-arabino-heptonate is bound by residues 191 to 194 and Lys-243; that span reads EVVK. Residue Glu-253 is the Proton acceptor; for 3-dehydroquinate synthase activity of the active site. Residues 257 to 261 and His-264 each bind 7-phospho-2-dehydro-3-deoxy-D-arabino-heptonate; that span reads RNLLN. His-264 serves as a coordination point for Zn(2+). The active-site Proton acceptor; for 3-dehydroquinate synthase activity is His-268. Residues His-280 and Lys-351 each contribute to the 7-phospho-2-dehydro-3-deoxy-D-arabino-heptonate site. Residue His-280 participates in Zn(2+) binding. Residues 392–838 are EPSP synthase; that stretch reads VHPFTNPPKE…WDILHSKFKI (447 aa). A shikimate kinase region spans residues 858–1048; it reads DKSIIVIGMR…VPAGRSAAVV (191 aa). 865-872 serves as a coordination point for ATP; that stretch reads GMRGTGKS. The 3-dehydroquinase stretch occupies residues 1049–1258; the sequence is LTSPDLNEVV…NDEEFLTIGE (210 aa). The Schiff-base intermediate with substrate; for 3-dehydroquinate dehydratase activity role is filled by Arg-1194. Positions 1271–1551 are shikimate dehydrogenase; sequence AKKFWVIGSP…EIIHRAVVEE (281 aa).

It in the N-terminal section; belongs to the sugar phosphate cyclases superfamily. Dehydroquinate synthase family. This sequence in the 2nd section; belongs to the EPSP synthase family. The protein in the 3rd section; belongs to the shikimate kinase family. In the 4th section; belongs to the type-I 3-dehydroquinase family. It in the C-terminal section; belongs to the shikimate dehydrogenase family. As to quaternary structure, homodimer. Zn(2+) is required as a cofactor.

It is found in the cytoplasm. It catalyses the reaction 7-phospho-2-dehydro-3-deoxy-D-arabino-heptonate = 3-dehydroquinate + phosphate. It carries out the reaction 3-dehydroquinate = 3-dehydroshikimate + H2O. The catalysed reaction is shikimate + NADP(+) = 3-dehydroshikimate + NADPH + H(+). The enzyme catalyses shikimate + ATP = 3-phosphoshikimate + ADP + H(+). It catalyses the reaction 3-phosphoshikimate + phosphoenolpyruvate = 5-O-(1-carboxyvinyl)-3-phosphoshikimate + phosphate. Its pathway is metabolic intermediate biosynthesis; chorismate biosynthesis; chorismate from D-erythrose 4-phosphate and phosphoenolpyruvate: step 2/7. It functions in the pathway metabolic intermediate biosynthesis; chorismate biosynthesis; chorismate from D-erythrose 4-phosphate and phosphoenolpyruvate: step 3/7. The protein operates within metabolic intermediate biosynthesis; chorismate biosynthesis; chorismate from D-erythrose 4-phosphate and phosphoenolpyruvate: step 4/7. It participates in metabolic intermediate biosynthesis; chorismate biosynthesis; chorismate from D-erythrose 4-phosphate and phosphoenolpyruvate: step 5/7. Its pathway is metabolic intermediate biosynthesis; chorismate biosynthesis; chorismate from D-erythrose 4-phosphate and phosphoenolpyruvate: step 6/7. The AROM polypeptide catalyzes 5 consecutive enzymatic reactions in prechorismate polyaromatic amino acid biosynthesis. The protein is Pentafunctional AROM polypeptide of Candida albicans (strain SC5314 / ATCC MYA-2876) (Yeast).